Reading from the N-terminus, the 347-residue chain is Protein RecA (347 aa).

65 to 72 (GPESSGKT) is a binding site for ATP.

The protein belongs to the RecA family.

It localises to the cytoplasm. In terms of biological role, can catalyze the hydrolysis of ATP in the presence of single-stranded DNA, the ATP-dependent uptake of single-stranded DNA by duplex DNA, and the ATP-dependent hybridization of homologous single-stranded DNAs. It interacts with LexA causing its activation and leading to its autocatalytic cleavage. In Stutzerimonas stutzeri (Pseudomonas stutzeri), this protein is Protein RecA.